We begin with the raw amino-acid sequence, 137 residues long: Prostate and testis expressed protein 13 (137 aa).

A signal peptide spans 1 to 20; the sequence is MFQKLLLSVFIILLMDVGER. The UPAR/Ly6 domain occupies 28–114; it reads RHCNLCSHYD…CIDRNYCNDG (87 aa). 5 disulfide bridges follow: C30–C60, C33–C41, C48–C84, C87–C104, and C105–C111. The N-linked (GlcNAc...) asparagine glycan is linked to N57.

This sequence belongs to the PATE family. In terms of tissue distribution, strongly expressed in the epididymis, including the initial segment, caput, corpus and cauda regions. Weakly expressed in prostate.

It localises to the secreted. The sequence is that of Prostate and testis expressed protein 13 from Mus musculus (Mouse).